A 565-amino-acid chain; its full sequence is NAD-dependent malic enzyme (565 aa).

Catalysis depends on tyrosine 104, which acts as the Proton donor. Arginine 157 is a binding site for NAD(+). Lysine 175 (proton acceptor) is an active-site residue. Residues glutamate 246, aspartate 247, and aspartate 270 each contribute to the a divalent metal cation site. NAD(+) is bound by residues aspartate 270 and asparagine 418.

The protein belongs to the malic enzymes family. In terms of assembly, homotetramer. Mg(2+) serves as cofactor. It depends on Mn(2+) as a cofactor.

It catalyses the reaction (S)-malate + NAD(+) = pyruvate + CO2 + NADH. The enzyme catalyses oxaloacetate + H(+) = pyruvate + CO2. The protein is NAD-dependent malic enzyme of Yersinia enterocolitica serotype O:8 / biotype 1B (strain NCTC 13174 / 8081).